The following is a 178-amino-acid chain: Gamma-crystallin S (178 aa).

Position 2 is an N-acetylserine (Ser-2). The segment at 2–5 (SKSV) is N-terminal arm. Beta/gamma crystallin 'Greek key' domains lie at 6–44 (AKITFYDDKNFQGHHYECDSDCPDFHTYLSCCNSIRVTG) and 45–87 (GAWV…KVIH). The interval 88–93 (LSSGGQ) is connecting peptide. Beta/gamma crystallin 'Greek key' domains lie at 94 to 134 (YKLQ…KVLD) and 135 to 177 (GVWV…RRIM).

It belongs to the beta/gamma-crystallin family. As to quaternary structure, monomer.

Crystallins are the dominant structural components of the vertebrate eye lens. The protein is Gamma-crystallin S (CRYGS) of Macropus fuliginosus (Western gray kangaroo).